Consider the following 357-residue polypeptide: Velvet complex subunit 2 (357 aa).

A Velvet domain is found at 32-341 (RRAERKYKLE…AQQGIKIPIR (310 aa)).

Belongs to the velvet family. VelB subfamily. In terms of assembly, component of the heterotrimeric velvet complex composed of LAE1, VEL1 and VEL2; VEL1A acting as a bridging protein between LAE1 and VEL2. Forms a heterodimeric complex with VOS1; the formation of the VEL2-VOS1 complex is light-dependent.

Its subcellular location is the nucleus. The protein localises to the cytoplasm. Component of the velvet transcription factor complex that controls sexual/asexual developmental ratio in response to light, promoting sexual development in the darkness while stimulating asexual sporulation under illumination. The velvet complex acts as a global regulator for secondary metabolite gene expression. Component of the VEL2-VOS1 heterodimeric complex that plays a dual role in activating genes associated with spore maturation and repressing certain development-associated genes. The complex binds DNA through the DNA-binding domain of VOS1 that recognizes an 11-nucleotide consensus sequence 5'-CTGGCCGCGGC-3' consisting of two motifs in the promoters of key developmental regulatory genes. The VEL2-VOS1 complex is required for normal pseudothecium development and regulates asexual spore compartmentalization, pigmentation and germination. The chain is Velvet complex subunit 2 from Cochliobolus heterostrophus (strain C5 / ATCC 48332 / race O) (Southern corn leaf blight fungus).